Consider the following 440-residue polypeptide: MESQQLSNYPHISHGSACASVTSKEVHTNQDPLDVSASKIQEYDKASTKANSQQTTTPASSAVPENPHHASPQPASVPPPQNGPYPQQCMMTQNQANPSGWSFYGHPSMIPYTPYQMSPMYFPPGPQSQFPQYPSSVGTPLSTPSPESGNTFTDSSSADSDMTSTKKYVRPPPMLTSPNDFPNWVKTYIKFLQNSNLGGIIPTVNGKPVRQITDDELTFLYNTFQIFAPSQFLPTWVKDILSVDYTDIMKILSKSIEKMQSDTQEANDIVTLANLQYNGSTPADAFETKVTNIIDRLNNNGIHINNKVACQLIMRGLSGEYKFLRYTRHRHLNMTVAELFLDIHAIYEEQQGSRNSKPNYRRNPSDEKNDSRSYTNTTKPKVIARNPQKTNNSKSKTARAHNVSTSNNSPSTDNDSISKSTTEPIQLNNKHDLHLRPETY.

Composition is skewed to polar residues over residues 1–10, 48–60, and 127–152; these read MESQQLSNYP, TKAN…TPAS, and QSQF…GNTF. Disordered regions lie at residues 1–93, 126–173, and 352–440; these read MESQ…MMTQ, PQSQ…RPPP, and GSRN…PETY. Residues 153-165 are compositionally biased toward low complexity; that stretch reads TDSSSADSDMTST. An RNA-binding region spans residues 299–401; sequence NNGIHINNKV…NSKSKTARAH (103 aa). Residues 402–418 are compositionally biased toward low complexity; that stretch reads NVSTSNNSPSTDNDSIS. Ser-416 bears the Phosphoserine mark. The span at 419–428 shows a compositional bias: polar residues; sequence KSTTEPIQLN. The span at 429–440 shows a compositional bias: basic and acidic residues; that stretch reads NKHDLHLRPETY.

In terms of assembly, homotrimer.

The protein resides in the cytoplasm. Capsid protein (CA) is the structural component of the virus-like particle (VLP), forming the shell that encapsulates the retrotransposons dimeric RNA genome. The particles are assembled from trimer-clustered units and there are holes in the capsid shells that allow for the diffusion of macromolecules. CA also has nucleocapsid-like chaperone activity, promoting primer tRNA(i)-Met annealing to the multipartite primer-binding site (PBS), dimerization of Ty1 RNA and initiation of reverse transcription. This is Transposon Ty1-ER2 Gag polyprotein (TY1A-ER2) from Saccharomyces cerevisiae (strain ATCC 204508 / S288c) (Baker's yeast).